The chain runs to 254 residues: Ribonuclease HII (254 aa).

An RNase H type-2 domain is found at 46-234; sequence KLIAGIDEVG…VWMASAPQEV (189 aa). A divalent metal cation contacts are provided by D52, E53, and D144.

Belongs to the RNase HII family. Requires Mn(2+) as cofactor. Mg(2+) is required as a cofactor.

The protein resides in the cytoplasm. It carries out the reaction Endonucleolytic cleavage to 5'-phosphomonoester.. Its function is as follows. Endonuclease that specifically degrades the RNA of RNA-DNA hybrids. The polypeptide is Ribonuclease HII (Koribacter versatilis (strain Ellin345)).